Consider the following 621-residue polypeptide: KIF-binding protein (621 aa).

Ser178 is subject to Phosphoserine.

Belongs to the KIF-binding protein family. In terms of assembly, interacts with KIF1B; positively regulates KIF1B microtubule motor activity. Interacts with STMN2.

The protein localises to the cytoplasm. The protein resides in the cytoskeleton. Functionally, activator of KIF1B plus-end-directed microtubule motor activity. Required for organization of axonal microtubules, and axonal outgrowth and maintenance during peripheral and central nervous system development. The polypeptide is KIF-binding protein (KIFBP) (Bos taurus (Bovine)).